A 211-amino-acid chain; its full sequence is Orotidine 5'-phosphate decarboxylase (211 aa).

Residues Asp7, Lys29, 57 to 66 (DLKLADIPNT), Ser109, 162 to 172 (PGIGAQGGSPV), Gly185, and Arg186 each bind substrate. Residue Lys59 is the Proton donor of the active site.

The protein belongs to the OMP decarboxylase family. Type 1 subfamily. As to quaternary structure, homodimer.

It carries out the reaction orotidine 5'-phosphate + H(+) = UMP + CO2. It participates in pyrimidine metabolism; UMP biosynthesis via de novo pathway; UMP from orotate: step 2/2. Catalyzes the decarboxylation of orotidine 5'-monophosphate (OMP) to uridine 5'-monophosphate (UMP). The sequence is that of Orotidine 5'-phosphate decarboxylase from Pyrococcus furiosus (strain ATCC 43587 / DSM 3638 / JCM 8422 / Vc1).